We begin with the raw amino-acid sequence, 79 residues long: Acyl carrier protein (79 aa).

In terms of domain architecture, Carrier spans Gln3–Lys78. Ser38 carries the O-(pantetheine 4'-phosphoryl)serine modification.

Belongs to the acyl carrier protein (ACP) family. Post-translationally, 4'-phosphopantetheine is transferred from CoA to a specific serine of apo-ACP by AcpS. This modification is essential for activity because fatty acids are bound in thioester linkage to the sulfhydryl of the prosthetic group.

It is found in the cytoplasm. It functions in the pathway lipid metabolism; fatty acid biosynthesis. Functionally, carrier of the growing fatty acid chain in fatty acid biosynthesis. This is Acyl carrier protein from Prochlorococcus marinus (strain MIT 9312).